The sequence spans 87 residues: U3-theraphotoxin-Hhn1a 12 (87 aa).

A signal peptide spans Met1–Ala24. Positions Ser25–Arg52 are excised as a propeptide. Cystine bridges form between Cys54–Cys67, Cys61–Cys72, and Cys66–Cys79.

The protein belongs to the neurotoxin 10 (Hwtx-1) family. 51 (Hntx-8) subfamily. Hntx-8 sub-subfamily. Expressed by the venom gland.

The protein localises to the secreted. Its function is as follows. Ion channel inhibitor. This is U3-theraphotoxin-Hhn1a 12 from Cyriopagopus hainanus (Chinese bird spider).